Here is a 541-residue protein sequence, read N- to C-terminus: 2-succinyl-5-enolpyruvyl-6-hydroxy-3-cyclohexene-1-carboxylate synthase (541 aa).

The protein belongs to the TPP enzyme family. MenD subfamily. In terms of assembly, homodimer. Mg(2+) is required as a cofactor. Mn(2+) serves as cofactor. It depends on thiamine diphosphate as a cofactor.

The enzyme catalyses isochorismate + 2-oxoglutarate + H(+) = 5-enolpyruvoyl-6-hydroxy-2-succinyl-cyclohex-3-ene-1-carboxylate + CO2. It participates in quinol/quinone metabolism; 1,4-dihydroxy-2-naphthoate biosynthesis; 1,4-dihydroxy-2-naphthoate from chorismate: step 2/7. The protein operates within quinol/quinone metabolism; menaquinone biosynthesis. Functionally, catalyzes the thiamine diphosphate-dependent decarboxylation of 2-oxoglutarate and the subsequent addition of the resulting succinic semialdehyde-thiamine pyrophosphate anion to isochorismate to yield 2-succinyl-5-enolpyruvyl-6-hydroxy-3-cyclohexene-1-carboxylate (SEPHCHC). The sequence is that of 2-succinyl-5-enolpyruvyl-6-hydroxy-3-cyclohexene-1-carboxylate synthase from Rhodococcus jostii (strain RHA1).